The primary structure comprises 278 residues: HTH-type transcriptional regulator HdfR (278 aa).

One can recognise an HTH lysR-type domain in the interval 1 to 58 (MDTELLKTFLEVSRTRHFGRAAEALYLTQSAVSFRIRQLENQLGVNLFTRHRNNIRLT). Residues 18–37 (FGRAAEALYLTQSAVSFRIR) constitute a DNA-binding region (H-T-H motif).

The protein belongs to the LysR transcriptional regulatory family.

Its function is as follows. Negatively regulates the transcription of the flagellar master operon flhDC by binding to the upstream region of the operon. This Salmonella newport (strain SL254) protein is HTH-type transcriptional regulator HdfR.